Reading from the N-terminus, the 160-residue chain is Large ribosomal subunit protein uL11 (160 aa).

It belongs to the universal ribosomal protein uL11 family. As to quaternary structure, part of the ribosomal stalk of the 50S ribosomal subunit. Interacts with L10 and the large rRNA to form the base of the stalk. L10 forms an elongated spine to which L12 dimers bind in a sequential fashion forming a multimeric L10(L12)X complex.

Functionally, forms part of the ribosomal stalk which helps the ribosome interact with GTP-bound translation factors. This chain is Large ribosomal subunit protein uL11, found in Methanococcus aeolicus (strain ATCC BAA-1280 / DSM 17508 / OCM 812 / Nankai-3).